Reading from the N-terminus, the 250-residue chain is Phosphate import ATP-binding protein PstB (250 aa).

The region spanning 4–245 (LTARDLKLSF…PRHELTEKYV (242 aa)) is the ABC transporter domain. 36–43 (GPSGSGKS) contacts ATP.

This sequence belongs to the ABC transporter superfamily. Phosphate importer (TC 3.A.1.7) family. In terms of assembly, the complex is composed of two ATP-binding proteins (PstB), two transmembrane proteins (PstC and PstA) and a solute-binding protein (PstS).

It is found in the cell membrane. It carries out the reaction phosphate(out) + ATP + H2O = ADP + 2 phosphate(in) + H(+). Its function is as follows. Part of the ABC transporter complex PstSACB involved in phosphate import. Responsible for energy coupling to the transport system. The sequence is that of Phosphate import ATP-binding protein PstB from Pyrobaculum aerophilum (strain ATCC 51768 / DSM 7523 / JCM 9630 / CIP 104966 / NBRC 100827 / IM2).